The sequence spans 397 residues: L-asparaginase-like protein GM15681 (397 aa).

An N-terminal signal peptide occupies residues 1–22 (MLAQSCCLRLLILLLLFTSICS). Cystine bridges form between C90-C95, C189-C205, and C344-C371.

This sequence belongs to the Ntn-hydrolase family.

This Drosophila sechellia (Fruit fly) protein is L-asparaginase-like protein GM15681.